Here is a 911-residue protein sequence, read N- to C-terminus: Protein translocase subunit SecA (911 aa).

Residues Gln90, Gly108–Thr112, and Asp515 contribute to the ATP site. Cys891, Cys893, Cys902, and His903 together coordinate Zn(2+).

This sequence belongs to the SecA family. Monomer and homodimer. Part of the essential Sec protein translocation apparatus which comprises SecA, SecYEG and auxiliary proteins SecDF-YajC and YidC. It depends on Zn(2+) as a cofactor.

It is found in the cell inner membrane. The protein localises to the cytoplasm. It catalyses the reaction ATP + H2O + cellular proteinSide 1 = ADP + phosphate + cellular proteinSide 2.. Part of the Sec protein translocase complex. Interacts with the SecYEG preprotein conducting channel. Has a central role in coupling the hydrolysis of ATP to the transfer of proteins into and across the cell membrane, serving both as a receptor for the preprotein-SecB complex and as an ATP-driven molecular motor driving the stepwise translocation of polypeptide chains across the membrane. The sequence is that of Protein translocase subunit SecA from Blochmanniella pennsylvanica (strain BPEN).